An 874-amino-acid polypeptide reads, in one-letter code: Rho GTPase-activating protein 42 (874 aa).

In terms of domain architecture, BAR spans 7–262 (EFSDSYLDSP…MKSANQDYRP (256 aa)). Positions 225 to 261 (KQQLQFNLQNTRNNFESTRQEVERLMQRMKSANQDYR) form a coiled coil. The region spanning 265–374 (QWTMEGYLYV…WLEAMDGKEP (110 aa)) is the PH domain. Tyr376 carries the post-translational modification Phosphotyrosine. In terms of domain architecture, Rho-GAP spans 376–572 (YTLPAIISKK…ILIEHYEKIF (197 aa)). Positions 575-720 (APDPSIPLPQ…GDVSPPIDLV (146 aa)) are disordered. Positions 620–650 (DSYSSSPDSTPMGSIESLSSHSSEQNSTTKS) are enriched in low complexity. Polar residues predominate over residues 667–686 (TPSSSNGQKSLGLWTTSPES). Ser683 bears the Phosphoserine mark. Basic and acidic residues predominate over residues 687–697 (SSREDATKTDA). Over residues 700–711 (DCQSVASVTSPG) the composition is skewed to polar residues. Phosphoserine occurs at positions 740, 753, 756, and 811. The span at 749–762 (SYSGSIQSLTSVGS) shows a compositional bias: polar residues. The segment at 749 to 777 (SYSGSIQSLTSVGSKETPKASPNPDLPPK) is disordered. An SH3 domain is found at 816-874 (SSGRQAKAMYSCKAEHSHELSFPQGAIFSNVYPSVEPGWLKATYEGKTGLVPENYVVFL). Tyr870 is subject to Phosphotyrosine.

As to expression, highly and selectively expressed in smooth muscle cells.

Functionally, may influence blood pressure by functioning as a GTPase-activating protein for RHOA in vascular smooth muscle. The polypeptide is Rho GTPase-activating protein 42 (Homo sapiens (Human)).